Consider the following 221-residue polypeptide: Protein DEHYDRATION-INDUCED 19 homolog 2 (221 aa).

2 disordered regions span residues 1-24 (MEDD…TAAK) and 162-193 (VLPD…SDSD).

This sequence belongs to the Di19 family. Not phosphorylated in vitro by CPK3 or CPK11. As to expression, expressed in seedlings, roots, leaves, stems, flowers and siliques.

It localises to the cytoplasm. The protein localises to the nucleus. The protein is Protein DEHYDRATION-INDUCED 19 homolog 2 (DI19-2) of Arabidopsis thaliana (Mouse-ear cress).